Here is a 219-residue protein sequence, read N- to C-terminus: Ras-related protein Rab-3 (219 aa).

GTP is bound by residues 29-37 (GNSSVGKTS), 48-54 (TSAFVST), 77-81 (DTAGQ), 135-138 (NKCD), and 165-167 (SAK). The short motif at 51–59 (FVSTVGIDF) is the Effector region element. Positions 191 to 219 (LDKDPQQQPKGQKLEANPTQKPAQQQCNC) are disordered. The span at 207 to 219 (NPTQKPAQQQCNC) shows a compositional bias: polar residues. Residues cysteine 217 and cysteine 219 are each lipidated (S-geranylgeranyl cysteine). Cysteine 219 is subject to Cysteine methyl ester.

Belongs to the small GTPase superfamily. Rab family.

It is found in the cell membrane. Its function is as follows. Involved in exocytosis by regulating a late step in synaptic vesicle fusion. Could play a role in neurotransmitter release by regulating membrane flow in the nerve terminal. Plays a role in the recruitment of endophilin unc-57 to synaptic vesicles. Probably by controlling dense-core vesicle trafficking, plays a role in the AVG neuron-mediated formation of the right axon tract of the ventral nerve cord. This chain is Ras-related protein Rab-3 (rab-3), found in Caenorhabditis elegans.